The sequence spans 333 residues: Adenosine deaminase (333 aa).

Residues His12 and His14 each contribute to the Zn(2+) site. Substrate contacts are provided by His14, Asp16, and Gly170. Zn(2+) is bound at residue His197. Glu200 (proton donor) is an active-site residue. Residue Asp278 coordinates Zn(2+). Asp279 lines the substrate pocket.

It belongs to the metallo-dependent hydrolases superfamily. Adenosine and AMP deaminases family. Adenosine deaminase subfamily. Requires Zn(2+) as cofactor.

It catalyses the reaction adenosine + H2O + H(+) = inosine + NH4(+). The catalysed reaction is 2'-deoxyadenosine + H2O + H(+) = 2'-deoxyinosine + NH4(+). In terms of biological role, catalyzes the hydrolytic deamination of adenosine and 2-deoxyadenosine. The protein is Adenosine deaminase of Shigella boydii serotype 4 (strain Sb227).